We begin with the raw amino-acid sequence, 1090 residues long: Pullulanase (1090 aa).

Residues 1–19 (MLRYTRNALVLGSLVLLSG) form the signal peptide. The N-palmitoyl cysteine moiety is linked to residue Cys-20. A lipid anchor (S-diacylglycerol cysteine) is attached at Cys-20. Asp-684 (nucleophile) is an active-site residue. The Proton donor role is filled by Glu-713.

The protein belongs to the glycosyl hydrolase 13 family. Homotrimer.

It localises to the cell membrane. The catalysed reaction is Hydrolysis of (1-&gt;6)-alpha-D-glucosidic linkages in pullulan, amylopectin and glycogen, and in the alpha- and beta-limit dextrins of amylopectin and glycogen.. The protein is Pullulanase (pulA) of Klebsiella pneumoniae.